The sequence spans 445 residues: Trigger factor (445 aa).

The 86-residue stretch at Gly166–Val251 folds into the PPIase FKBP-type domain.

The protein belongs to the FKBP-type PPIase family. Tig subfamily.

It is found in the cytoplasm. The catalysed reaction is [protein]-peptidylproline (omega=180) = [protein]-peptidylproline (omega=0). In terms of biological role, involved in protein export. Acts as a chaperone by maintaining the newly synthesized protein in an open conformation. Functions as a peptidyl-prolyl cis-trans isomerase. The polypeptide is Trigger factor (Gluconacetobacter diazotrophicus (strain ATCC 49037 / DSM 5601 / CCUG 37298 / CIP 103539 / LMG 7603 / PAl5)).